Reading from the N-terminus, the 625-residue chain is Protein arginine N-methyltransferase skb1 (625 aa).

The SAM-dependent MTase PRMT-type domain maps to Leu-280 to Trp-588. S-adenosyl-L-methionine is bound by residues Tyr-296, Lys-305–Tyr-306, Glu-359, and Asp-386–Met-387. Active-site proton donor/acceptor residues include Glu-402 and Glu-411.

This sequence belongs to the class I-like SAM-binding methyltransferase superfamily. Protein arginine N-methyltransferase family. Interacts with the N-terminal regulatory domain of shk1. Shk1, cdc42 and skb1 are able to form a ternary complex in vivo. Interacts with orb6. Interacts with Cdr1 and the Cdr1 inhibitory target Wee1.

It localises to the nucleus. The protein resides in the cell tip. The protein localises to the cell septum. It is found in the cytoplasm. Its subcellular location is the cell cortex. S-adenosyl-L-methionine-dependent protein-arginine N-methyltransferase that can catalyze both the mono- and symmetric (type II) dimethylation of the guanidino nitrogens of arginine residues in target proteins. Delays mitotic entry by inhibiting the Cdr1-Wee1 signaling pathway. Cortical nodes sequester Skb1 from its regulatory targets Cdr1 and Wee1. Positively modulates the shk1 kinase function. May be a mediator of hyperosmotic stress response. Involved in the control of cell polarity by regulating the subcellular localization of Orb6 kinase. The polypeptide is Protein arginine N-methyltransferase skb1 (Schizosaccharomyces pombe (strain 972 / ATCC 24843) (Fission yeast)).